The primary structure comprises 996 residues: MEAAALLSPTATSRSPLPLLSTAPAAHRLHVLLPLSGRRRRLCLRSSPRPRGSLGCAGDCVVRSMGSSRERGVLVKTSSSSASVESATQEVGAASSGEWSGDAIRRRFLDFYAARGHKILPSSSLVPDDPTVFLTIAGMLQFKPIFLGKEPRRVPCATTSQKCIRTNDIENVGRTSRHQTFFEMLGNFSFGDYFKKEAITWAWELTTKEFGLPPERLWISVFQDDDEAFSIWHNEVGVPKERIKRLGEDDNFWTSGATGPCGPCSEIYYDFYPERGSSDADLGDDSRFIEFYNLVFMQYNKKDDGSLEPLKQKNIDTGMGLERMARILQKVPNNYETDLIFPIIEKAASMALVSYTTADDAMKTNLKIIGDHMRAVVYLISDGVIPSNIGRGYVVRRLIRRVVRTGRLIGIRGDGHGNSEGAFLPSLAEVAISLSTEIDPDVESRRKSILGELQREELRFVQTLERGEKLLDELLDEALSSAGNNGGKPCLSGKDVFLLYDTYGFPVEITAEIAGERGVIVDMKGFDMEMENQRKQSQAAHNVVKLSVGNETEIVKSIPDTEFLGYDSLSATAVVKGLLVNGNSVNVVSEGSDVEIFLDRTPFYAESGGQVGDNGFLYVYGEEDAKQKAVIEINDVQKSLGNIFVHKGTIKQGSVEVGKEIDAAVDAKLRQGAKAHHTATHLLQSALKSIIGSETSQAGSLVAFDRLRFDFNFHRPLSEEELMKIESLVNQWVSSATHLETKVMDLQDAKNAGAIAMFGEKYGEQVRVVEVPGVSMELCGGTHVSNTAEIRGFKIISEQGIASGVRRIEAVAGDAFVEYVCARDNYMRCLCSSLKVKAEDVNGRVETILEELRTTRNEVSSLRSKIAVLKAASLANKATTIDNTRVVVENMGDVDADGLKSAAEYLVDTLEDPAAVILGSSPGDGKVSLVAAFSPGVVKMGIQAGKFVGGIAKLCGGGGGGKPNFAQAGGRKPENLPGALEKARDEIVAAISSKSS.

Positions 677, 681, 779, and 783 each coordinate Zn(2+).

Belongs to the class-II aminoacyl-tRNA synthetase family. In terms of assembly, monomer. The cofactor is Zn(2+).

It localises to the plastid. The protein localises to the chloroplast. Its subcellular location is the mitochondrion. It catalyses the reaction tRNA(Ala) + L-alanine + ATP = L-alanyl-tRNA(Ala) + AMP + diphosphate. Its function is as follows. Catalyzes the attachment of alanine to tRNA(Ala) in a two-step reaction: alanine is first activated by ATP to form Ala-AMP and then transferred to the acceptor end of tRNA(Ala). Also edits incorrectly charged tRNA(Ala) via its editing domain. In Oryza sativa subsp. indica (Rice), this protein is Alanine--tRNA ligase, chloroplastic/mitochondrial.